The following is a 219-amino-acid chain: uncharacterized protein (219 aa).

Asp58 is a catalytic residue.

Belongs to the pseudouridine synthase RluA family.

It carries out the reaction a uridine in RNA = a pseudouridine in RNA. This is an uncharacterized protein from Zymomonas mobilis subsp. mobilis (strain ATCC 31821 / ZM4 / CP4).